The sequence spans 433 residues: Succinate--CoA ligase [GDP-forming] subunit beta, mitochondrial (433 aa).

The N-terminal 38 residues, 1 to 38 (MASPVAIAAQAGKLLRERALRPLLAVRSQAGHLTPRRW), are a transit peptide targeting the mitochondrion. An ATP-grasp domain is found at 47–275 (KKLMSEHGVR…NAEFRQKDIF (229 aa)). Residue glutamine 58 participates in GTP binding. The residue at position 67 (lysine 67) is an N6-acetyllysine; alternate. At lysine 67 the chain carries N6-succinyllysine; alternate. N6-acetyllysine is present on lysine 74. Lysine 79 carries the N6-succinyllysine modification. A GTP-binding site is contributed by 91 to 93 (GRG). 3 positions are modified to N6-acetyllysine: lysine 112, lysine 133, and lysine 140. Leucine 147 contacts GTP. Serine 162 is subject to Phosphoserine. N6-acetyllysine is present on lysine 201. At serine 217 the chain carries Phosphoserine. Lysine 219 and lysine 228 each carry N6-acetyllysine. Asparagine 244 and aspartate 258 together coordinate Mg(2+). Lysine 272 is subject to N6-acetyllysine. Asparagine 309 serves as a coordination point for substrate. N6-succinyllysine is present on lysine 339. The residue at position 348 (lysine 348) is an N6-acetyllysine. 366 to 368 (GIV) contributes to the substrate binding site. Lysine 387, lysine 407, and lysine 424 each carry N6-acetyllysine.

Belongs to the succinate/malate CoA ligase beta subunit family. GTP-specific subunit beta subfamily. As to quaternary structure, heterodimer of an alpha and a beta subunit. The beta subunit determines specificity for GTP. Mg(2+) is required as a cofactor.

The protein localises to the mitochondrion. The catalysed reaction is GTP + succinate + CoA = succinyl-CoA + GDP + phosphate. The protein operates within carbohydrate metabolism; tricarboxylic acid cycle; succinate from succinyl-CoA (ligase route): step 1/1. GTP-specific succinyl-CoA synthetase functions in the citric acid cycle (TCA), coupling the hydrolysis of succinyl-CoA to the synthesis of GTP and thus represents the only step of substrate-level phosphorylation in the TCA. The beta subunit provides nucleotide specificity of the enzyme and binds the substrate succinate, while the binding sites for coenzyme A and phosphate are found in the alpha subunit. In Mus musculus (Mouse), this protein is Succinate--CoA ligase [GDP-forming] subunit beta, mitochondrial.